The following is a 185-amino-acid chain: Transcription termination/antitermination protein NusG (185 aa).

A KOW domain is found at 134–162 (PGQMVRVIDGPFNDFDGLVEEVNYEKNRL).

It belongs to the NusG family.

Its function is as follows. Participates in transcription elongation, termination and antitermination. The chain is Transcription termination/antitermination protein NusG from Xylella fastidiosa (strain Temecula1 / ATCC 700964).